We begin with the raw amino-acid sequence, 255 residues long: Ribosomal RNA small subunit methyltransferase A (255 aa).

6 residues coordinate S-adenosyl-L-methionine: N12, L14, G39, E60, D84, and N106.

Belongs to the class I-like SAM-binding methyltransferase superfamily. rRNA adenine N(6)-methyltransferase family. RsmA subfamily.

It localises to the cytoplasm. It carries out the reaction adenosine(1518)/adenosine(1519) in 16S rRNA + 4 S-adenosyl-L-methionine = N(6)-dimethyladenosine(1518)/N(6)-dimethyladenosine(1519) in 16S rRNA + 4 S-adenosyl-L-homocysteine + 4 H(+). In terms of biological role, specifically dimethylates two adjacent adenosines (A1518 and A1519) in the loop of a conserved hairpin near the 3'-end of 16S rRNA in the 30S particle. May play a critical role in biogenesis of 30S subunits. This Janthinobacterium sp. (strain Marseille) (Minibacterium massiliensis) protein is Ribosomal RNA small subunit methyltransferase A.